Reading from the N-terminus, the 203-residue chain is MSRYTGPSWKQARRLGLSLTGTGKELARRNYVPGQHGPNNRSKLSEYGLQLAEKQKLRFTYGVGEKQFRNLFVQATKIKEGILGFNFMLLLERRLDNVVYRLGLATTRRQARQFVNHGHILVDGKRVDIPSYRVTPGQVISVREKSLKVPAILEAVEATLGRPAFVSFDAEKLEGSLTRLPERDEINPEINEALVVEFYNKML.

Positions 93-156 constitute an S4 RNA-binding domain; sequence RRLDNVVYRL…LKVPAILEAV (64 aa).

It belongs to the universal ribosomal protein uS4 family. As to quaternary structure, part of the 30S ribosomal subunit. Contacts protein S5. The interaction surface between S4 and S5 is involved in control of translational fidelity.

In terms of biological role, one of the primary rRNA binding proteins, it binds directly to 16S rRNA where it nucleates assembly of the body of the 30S subunit. Its function is as follows. With S5 and S12 plays an important role in translational accuracy. In Streptococcus gordonii (strain Challis / ATCC 35105 / BCRC 15272 / CH1 / DL1 / V288), this protein is Small ribosomal subunit protein uS4.